A 357-amino-acid polypeptide reads, in one-letter code: Large ribosomal subunit protein uL10 (357 aa).

The disordered stretch occupies residues 311–357; the sequence is MVSRSAEAAERKEKEEEEEEEAEEEEAEEEEEEEEEEAAAGLGALFG. The segment covering 325 to 348 has biased composition (acidic residues); sequence EEEEEEEAEEEEAEEEEEEEEEEA.

The protein belongs to the universal ribosomal protein uL10 family. As to quaternary structure, part of the 50S ribosomal subunit. Forms part of the ribosomal stalk which helps the ribosome interact with GTP-bound translation factors. Forms a heptameric L10(L12)2(L12)2(L12)2 complex, where L10 forms an elongated spine to which the L12 dimers bind in a sequential fashion.

Its function is as follows. Forms part of the ribosomal stalk, playing a central role in the interaction of the ribosome with GTP-bound translation factors. The protein is Large ribosomal subunit protein uL10 of Methanopyrus kandleri (strain AV19 / DSM 6324 / JCM 9639 / NBRC 100938).